Consider the following 266-residue polypeptide: MRILLTNDDGIYSNGLRAAVKALSELGEVYVVAPLFQRSASGRAMTLHRPIRAKRVDVPGARIAYGIDGTPTDCVIFAIARFGSFDLAVSGINLGENLSTEITVSGTASAAIEASTHGIPSIAVSLEVDWKKTLGEGEGVDFSVSAHFLRRIAGAVLERGLPEGVDMLNVNVPSDATEDTKMAITRLARKRYSPTVEERIDPKGNPYYWIVGRLVQDFEPGTDAYALKVERKVSVTPINIDMTARVDFEKLKNVLFGESLQTGRTY.

A divalent metal cation-binding residues include Asp-8, Asp-9, Ser-39, and Asn-93.

The protein belongs to the SurE nucleotidase family. A divalent metal cation is required as a cofactor.

Its subcellular location is the cytoplasm. The catalysed reaction is a ribonucleoside 5'-phosphate + H2O = a ribonucleoside + phosphate. Functionally, nucleotidase that shows phosphatase activity on nucleoside 5'-monophosphates. The polypeptide is 5'-nucleotidase SurE (Thermococcus gammatolerans (strain DSM 15229 / JCM 11827 / EJ3)).